Consider the following 233-residue polypeptide: Cytochrome c biogenesis ATP-binding export protein CcmA (233 aa).

Residues 17–233 (FAGEDLLCVR…AAGLFLEDEG (217 aa)) form the ABC transporter domain. ATP is bound at residue 49 to 56 (GPNGSGKS).

It belongs to the ABC transporter superfamily. CcmA exporter (TC 3.A.1.107) family. In terms of assembly, the complex is composed of two ATP-binding proteins (CcmA) and two transmembrane proteins (CcmB).

The protein resides in the cell inner membrane. It carries out the reaction heme b(in) + ATP + H2O = heme b(out) + ADP + phosphate + H(+). Its function is as follows. Part of the ABC transporter complex CcmAB involved in the biogenesis of c-type cytochromes; once thought to export heme, this seems not to be the case, but its exact role is uncertain. Responsible for energy coupling to the transport system. This chain is Cytochrome c biogenesis ATP-binding export protein CcmA, found in Rhodospirillum rubrum (strain ATCC 11170 / ATH 1.1.1 / DSM 467 / LMG 4362 / NCIMB 8255 / S1).